The sequence spans 72 residues: uncharacterized protein (72 aa).

Residues 51–72 (AKGGRQKGEVVGVDDQCKEHKE) are disordered.

Belongs to the YiiE family.

This is an uncharacterized protein from Escherichia coli O157:H7.